A 346-amino-acid chain; its full sequence is tRNA(Ile)-lysidine synthase (346 aa).

32 to 37 (SGGPDS) is an ATP binding site.

The protein belongs to the tRNA(Ile)-lysidine synthase family.

Its subcellular location is the cytoplasm. It carries out the reaction cytidine(34) in tRNA(Ile2) + L-lysine + ATP = lysidine(34) in tRNA(Ile2) + AMP + diphosphate + H(+). Ligates lysine onto the cytidine present at position 34 of the AUA codon-specific tRNA(Ile) that contains the anticodon CAU, in an ATP-dependent manner. Cytidine is converted to lysidine, thus changing the amino acid specificity of the tRNA from methionine to isoleucine. The sequence is that of tRNA(Ile)-lysidine synthase from Rhodopseudomonas palustris (strain ATCC BAA-98 / CGA009).